Reading from the N-terminus, the 267-residue chain is Tryptophan synthase alpha chain (267 aa).

Residues Glu-49 and Asp-60 each act as proton acceptor in the active site.

Belongs to the TrpA family. As to quaternary structure, tetramer of two alpha and two beta chains.

It catalyses the reaction (1S,2R)-1-C-(indol-3-yl)glycerol 3-phosphate + L-serine = D-glyceraldehyde 3-phosphate + L-tryptophan + H2O. Its pathway is amino-acid biosynthesis; L-tryptophan biosynthesis; L-tryptophan from chorismate: step 5/5. Its function is as follows. The alpha subunit is responsible for the aldol cleavage of indoleglycerol phosphate to indole and glyceraldehyde 3-phosphate. In Salinispora arenicola (strain CNS-205), this protein is Tryptophan synthase alpha chain.